We begin with the raw amino-acid sequence, 150 residues long: Protein SprT-like (150 aa).

One can recognise a SprT-like domain in the interval 11 to 149 (ELVDKLSLTY…CGKCRGSLKE (139 aa)). A Zn(2+)-binding site is contributed by histidine 70. Residue glutamate 71 is part of the active site. Histidine 74 is a Zn(2+) binding site.

Belongs to the SprT family. Requires Zn(2+) as cofactor.

The protein resides in the cytoplasm. This is Protein SprT-like from Oceanobacillus iheyensis (strain DSM 14371 / CIP 107618 / JCM 11309 / KCTC 3954 / HTE831).